We begin with the raw amino-acid sequence, 390 residues long: LL-diaminopimelate aminotransferase 2 (390 aa).

Substrate contacts are provided by tyrosine 13 and glycine 38. Pyridoxal 5'-phosphate contacts are provided by residues tyrosine 67, 102-103 (SK), tyrosine 127, asparagine 177, tyrosine 208, and 236-238 (SLS). Substrate is bound by residues lysine 103, tyrosine 127, and asparagine 177. Lysine 239 is subject to N6-(pyridoxal phosphate)lysine. Arginine 247 is a pyridoxal 5'-phosphate binding site. Position 365 (arginine 365) interacts with substrate.

This sequence belongs to the class-I pyridoxal-phosphate-dependent aminotransferase family. LL-diaminopimelate aminotransferase subfamily. Homodimer. Requires pyridoxal 5'-phosphate as cofactor.

It carries out the reaction (2S,6S)-2,6-diaminopimelate + 2-oxoglutarate = (S)-2,3,4,5-tetrahydrodipicolinate + L-glutamate + H2O + H(+). It participates in amino-acid biosynthesis; L-lysine biosynthesis via DAP pathway; LL-2,6-diaminopimelate from (S)-tetrahydrodipicolinate (aminotransferase route): step 1/1. Its function is as follows. Involved in the synthesis of meso-diaminopimelate (m-DAP or DL-DAP), required for both lysine and peptidoglycan biosynthesis. Catalyzes the direct conversion of tetrahydrodipicolinate to LL-diaminopimelate. The polypeptide is LL-diaminopimelate aminotransferase 2 (Trichormus variabilis (strain ATCC 29413 / PCC 7937) (Anabaena variabilis)).